Consider the following 87-residue polypeptide: Venom serine protease inhibitor (87 aa).

The first 23 residues, 1–23, serve as a signal peptide directing secretion; sequence MPRLVLVSFLFLAIFSVFIGGFA. 5 cysteine pairs are disulfide-bonded: Cys-27–Cys-61, Cys-36–Cys-57, Cys-40–Cys-53, Cys-44–Cys-81, and Cys-63–Cys-75. Residues 27–81 form the TIL domain; it reads CPRNEIFTRCHAACQPSCARLARKPFCIKICKPGCICTSGYLRNKNNVCVPRSRC.

Belongs to the serine protease inhibitor-like (TIL domain-containing) family. In terms of tissue distribution, specifically expressed by the venom gland.

It is found in the secreted. Its function is as follows. Antifibrinolytic and antimicrobial serine protease inhibitor. Inhibits trypsin, plasmin and microbial serine proteases but not chymotrypsin, thrombin and elastase. Inhibits the plasmin-mediated degradation of fibrin to fibrin degradation products. Also binds to bacterial and fungal surfaces and exhibits antimicrobial activity against fungi as well as Gram-positive and Gram-negative bacteria. This Apis cerana (Indian honeybee) protein is Venom serine protease inhibitor.